The sequence spans 387 residues: MSEEKCSLTGGEEKGEELARSLAWQHLVKQAEEDDDDDEEALKKEEEEEEEEEEEDEEEEEEGPDSSSDDLSPEAPCMHPDLLELAVDREKCRSIRRQYRQLIYTVQQNREDIVNTASDSLTEALEEANVLFDGVSRTREAALDAQFLVLASDLGKEKAKQLNSDMSFFNHVAFCELLLVFVGLNWMEEECEELSECDESIALSFWNMLHKEATAWMLQAETFHFIFGSFKAERSARKPRQEHHKRACKMEGNGDMPTKLRKLDVHANQETTEKEVERILGLLQTYFQKYPDTPVSYFEFVIDPNSFSRTVENIFYVSFIIRDGFARIRLDQDRLPILEPTNVNQVDEENDSCSYCRKQGVISLSLQDWKNIVSTFEISEAMIKNSY.

Residues Met-1 to Ala-19 show a composition bias toward basic and acidic residues. Positions Met-1–Cys-77 are disordered. Residues Glu-32 to Ser-72 are compositionally biased toward acidic residues.

It belongs to the NSE4 family. As to quaternary structure, component of the SMC5-SMC6 complex which consists at least of SMC5, SMC6, NSMCE2, NSMCE1, NSMCE4A or EID3 and NSMCE3. NSMCE1, NSMCE4A or EID3 and NSMCE3 probably form a subcomplex that bridges the head domains of the SMC5:SMC6 heterodimer. Homodimer, and heterodimer with EID2. Interacts with the C-terminal region of CREBBP.

The protein resides in the nucleus. It localises to the cytoplasm. Its subcellular location is the chromosome. The protein localises to the telomere. Its function is as follows. Tissue-specific component of the SMC5-SMC6 complex, a complex involved in repair of DNA double-strand breaks by homologous recombination. The complex may promote sister chromatid homologous recombination by recruiting the SMC1-SMC3 cohesin complex to double-strand breaks. The complex is required for telomere maintenance via recombination and mediates sumoylation of shelterin complex (telosome) components. Acts as a repressor of nuclear receptor-dependent transcription possibly by interfering with CREBBP-dependent coactivation. May function as a coinhibitor of other CREBBP/EP300-dependent transcription factors. This chain is EP300-interacting inhibitor of differentiation 3, found in Rattus norvegicus (Rat).